The chain runs to 195 residues: ATP-dependent Clp protease proteolytic subunit 3 (195 aa).

The active-site Nucleophile is serine 97. Residue histidine 122 is part of the active site.

It belongs to the peptidase S14 family. As to quaternary structure, fourteen ClpP subunits assemble into 2 heptameric rings which stack back to back to give a disk-like structure with a central cavity, resembling the structure of eukaryotic proteasomes.

The protein resides in the cytoplasm. The enzyme catalyses Hydrolysis of proteins to small peptides in the presence of ATP and magnesium. alpha-casein is the usual test substrate. In the absence of ATP, only oligopeptides shorter than five residues are hydrolyzed (such as succinyl-Leu-Tyr-|-NHMec, and Leu-Tyr-Leu-|-Tyr-Trp, in which cleavage of the -Tyr-|-Leu- and -Tyr-|-Trp bonds also occurs).. Its function is as follows. Cleaves peptides in various proteins in a process that requires ATP hydrolysis. Has a chymotrypsin-like activity. Plays a major role in the degradation of misfolded proteins. In Rhizobium meliloti (strain 1021) (Ensifer meliloti), this protein is ATP-dependent Clp protease proteolytic subunit 3.